We begin with the raw amino-acid sequence, 92 residues long: DNA-directed RNA polymerase subunit Rpo11 (92 aa).

Belongs to the archaeal Rpo11/eukaryotic RPB11/RPC19 RNA polymerase subunit family. In terms of assembly, part of the 13-subunit RNA polymerase complex.

Its subcellular location is the cytoplasm. It catalyses the reaction RNA(n) + a ribonucleoside 5'-triphosphate = RNA(n+1) + diphosphate. DNA-dependent RNA polymerase (RNAP) catalyzes the transcription of DNA into RNA using the four ribonucleoside triphosphates as substrates. The chain is DNA-directed RNA polymerase subunit Rpo11 from Saccharolobus shibatae (strain ATCC 51178 / DSM 5389 / JCM 8931 / NBRC 15437 / B12) (Sulfolobus shibatae).